Reading from the N-terminus, the 307-residue chain is Upstream stimulatory factor 1 (307 aa).

2 disordered regions span residues 104–131 and 168–207; these read DDNG…SVGG and QGGS…VERR. Residues 122 to 131 show a composition bias toward low complexity; it reads PTDSSTSVGG. Residues 187–207 show a composition bias toward basic and acidic residues; it reads DGPRTTRDDKRRAQHNEVERR. The bHLH domain maps to 196 to 251; the sequence is KRRAQHNEVERRRRDKINNWIVQLSKIIPDCSMESTKTGQSKGGILSKACDYIQEL. Residues 268–289 form a leucine-zipper region; sequence LQMDNEVLRQQVEDLKNNNLTL.

In terms of assembly, efficient DNA binding requires dimerization with another bHLH protein. Binds DNA as a homodimer or a heterodimer. Oocyte and somatic tissue. Oocytic and somatic forms of this protein exist, probably as a result of post-translational modifications or minor splicing differences.

It localises to the nucleus. In terms of biological role, may act as a regulator of transcription factor IIIA (TFIIIA) gene expression. The protein is Upstream stimulatory factor 1 (usf1) of Xenopus borealis (Kenyan clawed frog).